The following is a 141-amino-acid chain: Cholinesterase (141 aa).

Asn39 carries N-linked (GlcNAc...) asparagine glycosylation. 49-50 (GG) lines the substrate pocket. Ser131 serves as the catalytic Acyl-ester intermediate. Ser131 is modified (phosphoserine).

It belongs to the type-B carboxylesterase/lipase family. In terms of assembly, homotetramer; disulfide-linked. Dimer of dimers. Present in most cells except erythrocytes.

Its subcellular location is the secreted. The enzyme catalyses an acylcholine + H2O = a carboxylate + choline + H(+). In terms of biological role, esterase with broad substrate specificity. Contributes to the inactivation of the neurotransmitter acetylcholine. Can degrade neurotoxic organophosphate esters. In Sus scrofa (Pig), this protein is Cholinesterase (BCHE).